The sequence spans 87 residues: Colicin-E7 immunity protein (87 aa).

Belongs to the colicins ColE2/ColE8/ColE9 and pyocins S1/S2 family.

This protein is able to protect a cell, which harbors the plasmid ColE7 encoding colicin E7, against colicin E7, it binds specifically to the DNase-type colicin and inhibits its bactericidal activity. Dimeric ImmE7 may possess a RNase activity that cleaves its own mRNA at a specific site and thus autoregulates translational expression of the downstream ceiE7 gene as well as degradation of the upstream ceaE7 mRNA. The protein is Colicin-E7 immunity protein (imm) of Escherichia coli.